A 267-amino-acid chain; its full sequence is Acetyl-coenzyme A carboxylase carboxyl transferase subunit beta, chloroplastic (267 aa).

A CoA carboxyltransferase N-terminal domain is found at 12-267; sequence LWKKCDSCNI…TIHMILDLHN (256 aa). The Zn(2+) site is built by C16, C19, C35, and C38. The C4-type zinc finger occupies 16–38; sequence CDSCNILISKFDFYKHDKVCPEC.

This sequence belongs to the AccD/PCCB family. Acetyl-CoA carboxylase is a heterohexamer composed of biotin carboxyl carrier protein, biotin carboxylase and 2 subunits each of ACCase subunit alpha and ACCase plastid-coded subunit beta (accD). Zn(2+) is required as a cofactor.

Its subcellular location is the plastid. The protein resides in the chloroplast stroma. The catalysed reaction is N(6)-carboxybiotinyl-L-lysyl-[protein] + acetyl-CoA = N(6)-biotinyl-L-lysyl-[protein] + malonyl-CoA. The protein operates within lipid metabolism; malonyl-CoA biosynthesis; malonyl-CoA from acetyl-CoA: step 1/1. Functionally, component of the acetyl coenzyme A carboxylase (ACC) complex. Biotin carboxylase (BC) catalyzes the carboxylation of biotin on its carrier protein (BCCP) and then the CO(2) group is transferred by the transcarboxylase to acetyl-CoA to form malonyl-CoA. This is Acetyl-coenzyme A carboxylase carboxyl transferase subunit beta, chloroplastic from Cyanidium caldarium (Red alga).